The chain runs to 2961 residues: Zinc finger ZZ-type and EF-hand domain-containing protein 1 (2961 aa).

Positions 1–41 (MGNAPSHSSEDEAAAAGGEGWGPHQDWAAVSGTTPGPGVAA) are disordered. A lipid anchor (N-myristoyl glycine) is attached at glycine 2. In terms of domain architecture, EF-hand spans 111–146 (CSSEQFEEAFAQFDAEGDGTVDAENMLEALKNSSGA). The region spanning 226-405 (LVQKEKESPG…AIWYWSLLTS (180 aa)) is the DOC domain. Phosphoserine is present on residues serine 240, serine 1475, serine 1488, and serine 1509. The tract at residues 1446–1531 (TADETSHLQP…PTRRPPFTRG (86 aa)) is disordered. Residues 1485-1502 (GDQSPGLGTQPKLPSSSG) show a composition bias toward polar residues. Threonine 1512 carries the post-translational modification Phosphothreonine. A compositionally biased stretch (low complexity) spans 1516–1531 (PLSPSTPTRRPPFTRG). Phosphoserine is present on serine 1518. Threonine 1521 and threonine 1523 each carry phosphothreonine. Phosphoserine is present on residues serine 1537 and serine 1540. 2 consecutive ZZ-type zinc fingers follow at residues 1778 to 1833 (NVDI…FTCD) and 1827 to 1882 (NMEF…MVTI). Zn(2+) contacts are provided by cysteine 1783, cysteine 1786, cysteine 1797, cysteine 1800, cysteine 1806, cysteine 1809, histidine 1819, histidine 1823, cysteine 1832, cysteine 1835, cysteine 1846, cysteine 1849, cysteine 1855, cysteine 1858, histidine 1868, and histidine 1872. Disordered regions lie at residues 1994-2078 (AVQG…PSPE) and 2426-2455 (LELD…KLDP). Over residues 2009–2027 (AVHEEIRPVDFKQRNKADK) the composition is skewed to basic and acidic residues. Over residues 2033–2043 (KDPSCQTQISD) the composition is skewed to polar residues. Residues 2426–2440 (LELDERGDREEEVER) show a composition bias toward basic and acidic residues. Serine 2444 is modified (phosphoserine). Lysine 2667 is modified (N6-acetyllysine).

Interacts with KLF6 and KLF9. Interacts via (ZZ-type 2 zinc finger) with histone H3 trimethylated at 'Lys-4' (H3K4me3) and histone H3 acetylated at 'Lys-4' (H3K4ac). As to expression, expressed at low levels in cerebellum.

Its function is as follows. Histone H3 reader which may act as a transcriptional coactivator for KLF6 and KLF9 transcription factors. This chain is Zinc finger ZZ-type and EF-hand domain-containing protein 1, found in Homo sapiens (Human).